The following is a 499-amino-acid chain: Bifunctional purine biosynthesis protein PurH (499 aa).

One can recognise an MGS-like domain in the interval 1–144 (MIKRALISVF…KNFQDVVVLT (144 aa)).

Belongs to the PurH family.

The enzyme catalyses (6R)-10-formyltetrahydrofolate + 5-amino-1-(5-phospho-beta-D-ribosyl)imidazole-4-carboxamide = 5-formamido-1-(5-phospho-D-ribosyl)imidazole-4-carboxamide + (6S)-5,6,7,8-tetrahydrofolate. It catalyses the reaction IMP + H2O = 5-formamido-1-(5-phospho-D-ribosyl)imidazole-4-carboxamide. It participates in purine metabolism; IMP biosynthesis via de novo pathway; 5-formamido-1-(5-phospho-D-ribosyl)imidazole-4-carboxamide from 5-amino-1-(5-phospho-D-ribosyl)imidazole-4-carboxamide (10-formyl THF route): step 1/1. It functions in the pathway purine metabolism; IMP biosynthesis via de novo pathway; IMP from 5-formamido-1-(5-phospho-D-ribosyl)imidazole-4-carboxamide: step 1/1. This is Bifunctional purine biosynthesis protein PurH from Clostridium acetobutylicum (strain ATCC 824 / DSM 792 / JCM 1419 / IAM 19013 / LMG 5710 / NBRC 13948 / NRRL B-527 / VKM B-1787 / 2291 / W).